A 72-amino-acid chain; its full sequence is Translation initiation factor IF-1 2 (72 aa).

An S1-like domain is found at 1–72; the sequence is MAKDDVIQMQ…SRARIVFRTK (72 aa).

Belongs to the IF-1 family. In terms of assembly, component of the 30S ribosomal translation pre-initiation complex which assembles on the 30S ribosome in the order IF-2 and IF-3, IF-1 and N-formylmethionyl-tRNA(fMet); mRNA recruitment can occur at any time during PIC assembly.

It is found in the cytoplasm. One of the essential components for the initiation of protein synthesis. Stabilizes the binding of IF-2 and IF-3 on the 30S subunit to which N-formylmethionyl-tRNA(fMet) subsequently binds. Helps modulate mRNA selection, yielding the 30S pre-initiation complex (PIC). Upon addition of the 50S ribosomal subunit IF-1, IF-2 and IF-3 are released leaving the mature 70S translation initiation complex. This chain is Translation initiation factor IF-1 2, found in Cupriavidus necator (strain ATCC 17699 / DSM 428 / KCTC 22496 / NCIMB 10442 / H16 / Stanier 337) (Ralstonia eutropha).